The chain runs to 325 residues: Sensor histidine kinase YxdK (325 aa).

The Cytoplasmic segment spans residues 1–8; it reads MKLFLRSH. A helical transmembrane segment spans residues 9 to 29; sequence AVLILLFLLQGLFVFFYYWFA. Residues 30-33 are Extracellular-facing; it reads GLHS. A helical transmembrane segment spans residues 34–54; that stretch reads FSHLFYILGVQLLILAGYLAY. Over 55-325 the chain is Cytoplasmic; sequence RWYKDRGVYH…SVRFSFLTKM (271 aa). One can recognise a Histidine kinase domain in the interval 118 to 325; that stretch reads QWVHQVKTPL…SVRFSFLTKM (208 aa). A Phosphohistidine; by autocatalysis modification is found at His-121.

The protein localises to the cell membrane. It carries out the reaction ATP + protein L-histidine = ADP + protein N-phospho-L-histidine.. Functionally, probable member of the two-component regulatory system YxdK/YxdJ. May activate YxdJ in response to the antibacterial protein LL-37. The sequence is that of Sensor histidine kinase YxdK (yxdK) from Bacillus subtilis (strain 168).